A 436-amino-acid polypeptide reads, in one-letter code: Glutamyl-tRNA(Gln) amidotransferase subunit D (436 aa).

One can recognise an Asparaginase/glutaminase domain in the interval 91 to 420 (QNISIISTGG…GEVAKLMNKN (330 aa)). Catalysis depends on residues T101, T177, D178, and K254.

Belongs to the asparaginase 1 family. GatD subfamily. In terms of assembly, heterodimer of GatD and GatE.

It catalyses the reaction L-glutamyl-tRNA(Gln) + L-glutamine + ATP + H2O = L-glutaminyl-tRNA(Gln) + L-glutamate + ADP + phosphate + H(+). Allows the formation of correctly charged Gln-tRNA(Gln) through the transamidation of misacylated Glu-tRNA(Gln) in organisms which lack glutaminyl-tRNA synthetase. The reaction takes place in the presence of glutamine and ATP through an activated gamma-phospho-Glu-tRNA(Gln). The GatDE system is specific for glutamate and does not act on aspartate. This is Glutamyl-tRNA(Gln) amidotransferase subunit D from Methanobrevibacter smithii (strain ATCC 35061 / DSM 861 / OCM 144 / PS).